The primary structure comprises 181 residues: ATP synthase subunit delta (181 aa).

It belongs to the ATPase delta chain family. In terms of assembly, F-type ATPases have 2 components, F(1) - the catalytic core - and F(0) - the membrane proton channel. F(1) has five subunits: alpha(3), beta(3), gamma(1), delta(1), epsilon(1). F(0) has three main subunits: a(1), b(2) and c(10-14). The alpha and beta chains form an alternating ring which encloses part of the gamma chain. F(1) is attached to F(0) by a central stalk formed by the gamma and epsilon chains, while a peripheral stalk is formed by the delta and b chains.

The protein localises to the cell membrane. F(1)F(0) ATP synthase produces ATP from ADP in the presence of a proton or sodium gradient. F-type ATPases consist of two structural domains, F(1) containing the extramembraneous catalytic core and F(0) containing the membrane proton channel, linked together by a central stalk and a peripheral stalk. During catalysis, ATP synthesis in the catalytic domain of F(1) is coupled via a rotary mechanism of the central stalk subunits to proton translocation. In terms of biological role, this protein is part of the stalk that links CF(0) to CF(1). It either transmits conformational changes from CF(0) to CF(1) or is implicated in proton conduction. This chain is ATP synthase subunit delta, found in Shouchella clausii (strain KSM-K16) (Alkalihalobacillus clausii).